The chain runs to 234 residues: Uridylate kinase (234 aa).

ATP is bound at residue 9 to 12 (KLSG). A UMP-binding site is contributed by Gly51. Residues Gly52 and Arg56 each coordinate ATP. Residues Asp71 and 132–139 (CGNPFFTT) contribute to the UMP site. Thr159, Tyr165, and Asp168 together coordinate ATP.

This sequence belongs to the UMP kinase family. In terms of assembly, homohexamer.

Its subcellular location is the cytoplasm. The catalysed reaction is UMP + ATP = UDP + ADP. It functions in the pathway pyrimidine metabolism; CTP biosynthesis via de novo pathway; UDP from UMP (UMPK route): step 1/1. Its activity is regulated as follows. Inhibited by UTP. In terms of biological role, catalyzes the reversible phosphorylation of UMP to UDP. The polypeptide is Uridylate kinase (Prochlorococcus marinus subsp. pastoris (strain CCMP1986 / NIES-2087 / MED4)).